Reading from the N-terminus, the 285-residue chain is Small ribosomal subunit protein uS2 (285 aa).

The interval 231–285 is disordered; the sequence is GGKSGQAAAEPMAEWERELLEQHNAQQAEQAEAPAAEAPAEPAEAPAAEAAPQGE. Over residues 255–285 the composition is skewed to low complexity; the sequence is AQQAEQAEAPAAEAPAEPAEAPAAEAAPQGE.

Belongs to the universal ribosomal protein uS2 family.

The sequence is that of Small ribosomal subunit protein uS2 from Micrococcus luteus (strain ATCC 4698 / DSM 20030 / JCM 1464 / CCM 169 / CCUG 5858 / IAM 1056 / NBRC 3333 / NCIMB 9278 / NCTC 2665 / VKM Ac-2230) (Micrococcus lysodeikticus).